A 271-amino-acid chain; its full sequence is Tumor necrosis factor receptor superfamily member 4 (271 aa).

Residues 1-19 (MYVWVQQPTAFLLLGLSLG) form the signal peptide. Over 20–210 (VTVKLNCVKD…TPTLVAPEGP (191 aa)) the chain is Extracellular. TNFR-Cys repeat units lie at residues 25–60 (NCVK…TVCH) and 61–102 (PCEP…DTVC). 8 disulfide bridges follow: Cys26–Cys37, Cys38–Cys51, Cys41–Cys59, Cys62–Cys76, Cys79–Cys94, Cys82–Cys102, Cys104–Cys122, and Cys125–Cys138. A TNFR-Cys 3; truncated repeat occupies 103–123 (QCRPGTQPRQDSSHKLGVDCV). One copy of the TNFR-Cys 4 repeat lies at 124–164 (PCPPGHFSPGSNQACKPWTNCTLSGKQIRHPASNSLDTVCE). N-linked (GlcNAc...) asparagine glycosylation is present at Asn143. A disulfide bond links Cys144 and Cys163. The helical transmembrane segment at 211–235 (AFAVILGLGLGLLAPLTVLLALYLL) threads the bilayer. Over 236 to 271 (RKAWRSPNTPKPCWGNSFRTPIQEEQTDTHFTLAKI) the chain is Cytoplasmic.

As to quaternary structure, interacts with TRAF2, TRAF3 and TRAF5. As to expression, activated T-cells.

Its subcellular location is the membrane. In terms of biological role, receptor for TNFSF4/OX40L/GP34. Is a costimulatory molecule implicated in long-term T-cell immunity. This is Tumor necrosis factor receptor superfamily member 4 (Tnfrsf4) from Rattus norvegicus (Rat).